Consider the following 1025-residue polypeptide: Multidrug resistance protein MdtC (1025 aa).

12 consecutive transmembrane segments (helical) span residues 3-23 (FFAL…AITL), 333-353 (EVEQ…FLFL), 360-380 (IIPA…MYLC), 387-407 (LSLM…IVVL), 431-451 (VGFT…PLLL), 463-483 (FAVT…TLTP), 528-548 (LVGV…ISIP), 853-873 (VILI…LYES), 875-895 (VHPL…LLAL), 897-917 (LFNA…IGIV), 953-973 (PIMM…LSGG), and 984-1004 (ITIV…TPVV).

This sequence belongs to the resistance-nodulation-cell division (RND) (TC 2.A.6) family. MdtC subfamily. In terms of assembly, part of a tripartite efflux system composed of MdtA, MdtB and MdtC. MdtC forms a heteromultimer with MdtB.

Its subcellular location is the cell inner membrane. Functionally, the MdtABC tripartite complex confers resistance against novobiocin and deoxycholate. The chain is Multidrug resistance protein MdtC from Escherichia coli O8 (strain IAI1).